A 181-amino-acid chain; its full sequence is Phospholipase A2 inhibitor gamma subunit B (181 aa).

Intrachain disulfides connect cysteine 3–cysteine 27, cysteine 6–cysteine 13, cysteine 20–cysteine 48, cysteine 54–cysteine 75, cysteine 76–cysteine 81, cysteine 101–cysteine 126, cysteine 119–cysteine 146, and cysteine 152–cysteine 172.

The protein belongs to the CNF-like-inhibitor family. Heterotrimer of 2 subunits A and 1 subunit B. In terms of tissue distribution, expressed by the liver.

Its subcellular location is the secreted. Strongly inhibits its own venom PLA2 and all other PLA2s tested including Elapid, Crotalid and Viperid venom PLA2s, as well as honeybee PLA2s. This chain is Phospholipase A2 inhibitor gamma subunit B, found in Laticauda semifasciata (Black-banded sea krait).